We begin with the raw amino-acid sequence, 74 residues long: Translation initiation factor IF-1 (74 aa).

Positions 1–72 constitute an S1-like domain; that stretch reads MSKQDLIEME…TKGRITYRLR (72 aa).

Belongs to the IF-1 family. Component of the 30S ribosomal translation pre-initiation complex which assembles on the 30S ribosome in the order IF-2 and IF-3, IF-1 and N-formylmethionyl-tRNA(fMet); mRNA recruitment can occur at any time during PIC assembly.

Its subcellular location is the cytoplasm. One of the essential components for the initiation of protein synthesis. Stabilizes the binding of IF-2 and IF-3 on the 30S subunit to which N-formylmethionyl-tRNA(fMet) subsequently binds. Helps modulate mRNA selection, yielding the 30S pre-initiation complex (PIC). Upon addition of the 50S ribosomal subunit IF-1, IF-2 and IF-3 are released leaving the mature 70S translation initiation complex. This Trichodesmium erythraeum (strain IMS101) protein is Translation initiation factor IF-1.